The sequence spans 481 residues: Argininosuccinate lyase (481 aa).

Positions 1 to 17 (MKNAPVDTQSDAATSFE) are enriched in polar residues. The interval 1–25 (MKNAPVDTQSDAATSFEGTAANPQW) is disordered.

This sequence belongs to the lyase 1 family. Argininosuccinate lyase subfamily.

It localises to the cytoplasm. It carries out the reaction 2-(N(omega)-L-arginino)succinate = fumarate + L-arginine. It functions in the pathway amino-acid biosynthesis; L-arginine biosynthesis; L-arginine from L-ornithine and carbamoyl phosphate: step 3/3. This is Argininosuccinate lyase from Gluconobacter oxydans (strain 621H) (Gluconobacter suboxydans).